A 321-amino-acid polypeptide reads, in one-letter code: L-carnitine dehydrogenase (321 aa).

An NAD(+)-binding site is contributed by 14-19 (GAGVIG).

Belongs to the 3-hydroxyacyl-CoA dehydrogenase family. L-carnitine dehydrogenase subfamily. In terms of assembly, homodimer.

The protein resides in the cytoplasm. It catalyses the reaction carnitine + NAD(+) = 3-dehydrocarnitine + NADH + H(+). It functions in the pathway amine and polyamine metabolism; carnitine metabolism. Catalyzes the NAD(+)-dependent oxidation of L-carnitine to 3-dehydrocarnitine. This chain is L-carnitine dehydrogenase, found in Burkholderia mallei (strain ATCC 23344).